The sequence spans 525 residues: GMP synthase [glutamine-hydrolyzing] (525 aa).

One can recognise a Glutamine amidotransferase type-1 domain in the interval 11-200 (PVLVVDFGAQ…LTEIAGLEQN (190 aa)). Cysteine 88 acts as the Nucleophile in catalysis. Catalysis depends on residues histidine 174 and glutamate 176. The GMPS ATP-PPase domain occupies 201–399 (WTAANIAEEL…LGLPEEIVNR (199 aa)). Residue 229 to 235 (SGGVDSA) coordinates ATP.

Homodimer.

The enzyme catalyses XMP + L-glutamine + ATP + H2O = GMP + L-glutamate + AMP + diphosphate + 2 H(+). Its pathway is purine metabolism; GMP biosynthesis; GMP from XMP (L-Gln route): step 1/1. Its function is as follows. Catalyzes the synthesis of GMP from XMP. The protein is GMP synthase [glutamine-hydrolyzing] of Corynebacterium diphtheriae (strain ATCC 700971 / NCTC 13129 / Biotype gravis).